Consider the following 303-residue polypeptide: L(+)-tartrate dehydratase subunit alpha (303 aa).

Residues C71, C190, and C277 each coordinate iron-sulfur cluster.

The protein belongs to the class-I fumarase family. Tetramer of two alpha and two beta subunits. The cofactor is iron-sulfur cluster.

It carries out the reaction (2R,3R)-tartrate = oxaloacetate + H2O. In Escherichia coli O157:H7, this protein is L(+)-tartrate dehydratase subunit alpha (ttdA).